An 829-amino-acid chain; its full sequence is Transcription activator GutR (829 aa).

The H-T-H motif DNA-binding region spans 42-61; the sequence is IDKIALQLGVSPNTIKSWIG. 200-207 contributes to the ATP binding site; that stretch reads GWAGMGKT. TPR repeat units follow at residues 697–730, 736–769, and 775–808; these read HRVL…SSTY, IEAY…KHNA, and IYYH…IDSW.

Activator of the glucitol dehydrogenase gene (gutB). The sequence is that of Transcription activator GutR (gutR) from Bacillus subtilis (strain 168).